A 183-amino-acid chain; its full sequence is ATP-dependent protease subunit HslV (183 aa).

Thr-9 is a catalytic residue. The Na(+) site is built by Ala-164, Cys-167, and Thr-170.

This sequence belongs to the peptidase T1B family. HslV subfamily. In terms of assembly, a double ring-shaped homohexamer of HslV is capped on each side by a ring-shaped HslU homohexamer. The assembly of the HslU/HslV complex is dependent on binding of ATP.

The protein localises to the cytoplasm. It catalyses the reaction ATP-dependent cleavage of peptide bonds with broad specificity.. Allosterically activated by HslU binding. Functionally, protease subunit of a proteasome-like degradation complex believed to be a general protein degrading machinery. This is ATP-dependent protease subunit HslV from Hydrogenovibrio crunogenus (strain DSM 25203 / XCL-2) (Thiomicrospira crunogena).